The following is a 226-amino-acid chain: Leucyl/phenylalanyl-tRNA--protein transferase (226 aa).

Belongs to the L/F-transferase family.

It localises to the cytoplasm. It catalyses the reaction N-terminal L-lysyl-[protein] + L-leucyl-tRNA(Leu) = N-terminal L-leucyl-L-lysyl-[protein] + tRNA(Leu) + H(+). It carries out the reaction N-terminal L-arginyl-[protein] + L-leucyl-tRNA(Leu) = N-terminal L-leucyl-L-arginyl-[protein] + tRNA(Leu) + H(+). The catalysed reaction is L-phenylalanyl-tRNA(Phe) + an N-terminal L-alpha-aminoacyl-[protein] = an N-terminal L-phenylalanyl-L-alpha-aminoacyl-[protein] + tRNA(Phe). In terms of biological role, functions in the N-end rule pathway of protein degradation where it conjugates Leu, Phe and, less efficiently, Met from aminoacyl-tRNAs to the N-termini of proteins containing an N-terminal arginine or lysine. This is Leucyl/phenylalanyl-tRNA--protein transferase from Bradyrhizobium sp. (strain ORS 278).